Here is a 1144-residue protein sequence, read N- to C-terminus: Type II inositol polyphosphate 5-phosphatase 14 (1144 aa).

Disordered stretches follow at residues 15-67 (ASLV…FDSS) and 81-118 (GRTS…DDIE). WD repeat units lie at residues 158–196 (ETQT…EVGC), 216–255 (VPTS…TTTA), 269–307 (AHRG…KSLV), 445–483 (EDTR…LREV), and 524–561 (SHNE…PLDS). Catalytic regions lie at residues 791–807 (DLVA…FGIT) and 870–885 (KKRI…YRDN). Lys949 participates in a covalent cross-link: Glycyl lysine isopeptide (Lys-Gly) (interchain with G-Cter in ubiquitin). Over residues 1111–1131 (TTMTKNLEGSTRYQTDANRGG) the composition is skewed to polar residues. The disordered stretch occupies residues 1111–1144 (TTMTKNLEGSTRYQTDANRGGSTRHRTDDSTRRG). The segment covering 1135-1144 (HRTDDSTRRG) has biased composition (basic and acidic residues).

This sequence belongs to the inositol polyphosphate 5-phosphatase family. It depends on Mg(2+) as a cofactor. As to expression, expressed in young seedlings and flowers.

The catalysed reaction is a 1,2-diacyl-sn-glycero-3-phospho-(1D-myo-inositol-4,5-bisphosphate) + H2O = a 1,2-diacyl-sn-glycero-3-phospho-(1D-myo-inositol 4-phosphate) + phosphate. The enzyme catalyses a 1,2-diacyl-sn-glycero-3-phospho-(1D-myo-inositol-3,4,5-trisphosphate) + H2O = a 1,2-diacyl-sn-glycero-3-phospho-(1D-myo-inositol-3,4-bisphosphate) + phosphate. It carries out the reaction 1D-myo-inositol 1,4,5-trisphosphate + H2O = 1D-myo-inositol 1,4-bisphosphate + phosphate. Its function is as follows. Has phosphatase activity toward PtdIns(4,5)P2, PtdIns(3,4,5)P3 and Ins(1,4,5)P3. The sequence is that of Type II inositol polyphosphate 5-phosphatase 14 from Arabidopsis thaliana (Mouse-ear cress).